A 76-amino-acid polypeptide reads, in one-letter code: MKKNIILNLIGLRCPEPIMIIRKTIRNMKDNEKILILSDDPATKRDIPNFCYFMEHKLLKNEIKVKPYRYLLKKGL.

The active-site Cysteine persulfide intermediate is the cysteine 14.

Belongs to the sulfur carrier protein TusA family. Interacts with IscS.

The protein resides in the cytoplasm. Its pathway is tRNA modification. Sulfur carrier protein involved in sulfur trafficking in the cell. Part of a sulfur-relay system required for 2-thiolation during synthesis of 2-thiouridine of the modified wobble base 5-methylaminomethyl-2-thiouridine (mnm(5)s(2)U) in tRNA. Interacts with IscS and stimulates its cysteine desulfurase activity. Accepts an activated sulfur from IscS, which is then transferred to TusD, and thus determines the direction of sulfur flow from IscS to 2-thiouridine formation. Also appears to be involved in sulfur transfer for the biosynthesis of molybdopterin. The sequence is that of Sulfur carrier protein TusA from Buchnera aphidicola subsp. Acyrthosiphon pisum (strain Tuc7).